The following is a 305-amino-acid chain: UDP-N-acetylenolpyruvoylglucosamine reductase 2 (305 aa).

Positions Val33–Gly197 constitute an FAD-binding PCMH-type domain. Arg176 is a catalytic residue. The Proton donor role is filled by Ser226. Glu296 is a catalytic residue.

This sequence belongs to the MurB family. The cofactor is FAD.

The protein resides in the cytoplasm. It carries out the reaction UDP-N-acetyl-alpha-D-muramate + NADP(+) = UDP-N-acetyl-3-O-(1-carboxyvinyl)-alpha-D-glucosamine + NADPH + H(+). It functions in the pathway cell wall biogenesis; peptidoglycan biosynthesis. Its function is as follows. Cell wall formation. The polypeptide is UDP-N-acetylenolpyruvoylglucosamine reductase 2 (murB2) (Bacillus cereus (strain ATCC 14579 / DSM 31 / CCUG 7414 / JCM 2152 / NBRC 15305 / NCIMB 9373 / NCTC 2599 / NRRL B-3711)).